The primary structure comprises 432 residues: Amino-acid acetyltransferase (432 aa).

In terms of domain architecture, N-acetyltransferase spans Glu-286 to Ser-425.

It belongs to the acetyltransferase family. ArgA subfamily.

The protein resides in the cytoplasm. It carries out the reaction L-glutamate + acetyl-CoA = N-acetyl-L-glutamate + CoA + H(+). It participates in amino-acid biosynthesis; L-arginine biosynthesis; N(2)-acetyl-L-ornithine from L-glutamate: step 1/4. The sequence is that of Amino-acid acetyltransferase from Pseudomonas aeruginosa (strain LESB58).